Reading from the N-terminus, the 98-residue chain is EKC/KEOPS complex subunit GON7 (98 aa).

Position 1 is an N-acetylmethionine (methionine 1). Positions 55–98 (DAQGLAEDPDDALDGDDEDDAEDENNSGRTNSDGPSAKRPKPAS) are disordered. Over residues 61-79 (EDPDDALDGDDEDDAEDEN) the composition is skewed to acidic residues.

Component of the EKC/KEOPS complex composed of at least GON7, TP53RK, TPRKB, OSGEP and LAGE3; the whole complex dimerizes.

The protein localises to the nucleus. Its function is as follows. Component of the EKC/KEOPS complex that is required for the formation of a threonylcarbamoyl group on adenosine at position 37 (t(6)A37) in tRNAs that read codons beginning with adenine. The complex is probably involved in the transfer of the threonylcarbamoyl moiety of threonylcarbamoyl-AMP (TC-AMP) to the N6 group of A37. GON7 plays a supporting role to the catalytic subunit OSGEP in the complex. The chain is EKC/KEOPS complex subunit GON7 from Mus musculus (Mouse).